The chain runs to 161 residues: Beta-lactoglobulin-2 (161 aa).

Disulfide bonds link Cys66–Cys159 and Cys106–Cys119.

Belongs to the calycin superfamily. Lipocalin family. Monomer. As to expression, synthesized in mammary gland and secreted in milk.

It localises to the secreted. Its function is as follows. Primary component of whey, it binds retinol and is probably involved in the transport of that molecule. The protein is Beta-lactoglobulin-2 (LGB2) of Canis lupus familiaris (Dog).